The sequence spans 454 residues: Bifunctional protein GlmU (454 aa).

A pyrophosphorylase region spans residues 1 to 226 (MALNVVILAA…AIEVEGANNR (226 aa)). Residues 8-11 (LAAG), Lys22, Gln73, 78-79 (GT), 100-102 (YGD), Gly137, Glu151, Asn166, and Asn224 each bind UDP-N-acetyl-alpha-D-glucosamine. Asp102 is a binding site for Mg(2+). Asn224 contacts Mg(2+). Positions 227-247 (VQLAQLERAYQARAAEKLMLE) are linker. Residues 248–454 (GANLRDPARI…GWPRPVKLKK (207 aa)) are N-acetyltransferase. Residues Arg330 and Lys348 each coordinate UDP-N-acetyl-alpha-D-glucosamine. Residue His360 is the Proton acceptor of the active site. Residues Tyr363 and Asn374 each contribute to the UDP-N-acetyl-alpha-D-glucosamine site. Acetyl-CoA-binding positions include Ala377, 383–384 (NY), Ser402, Ala420, and Arg437.

In the N-terminal section; belongs to the N-acetylglucosamine-1-phosphate uridyltransferase family. This sequence in the C-terminal section; belongs to the transferase hexapeptide repeat family. In terms of assembly, homotrimer. The cofactor is Mg(2+).

It is found in the cytoplasm. It carries out the reaction alpha-D-glucosamine 1-phosphate + acetyl-CoA = N-acetyl-alpha-D-glucosamine 1-phosphate + CoA + H(+). The enzyme catalyses N-acetyl-alpha-D-glucosamine 1-phosphate + UTP + H(+) = UDP-N-acetyl-alpha-D-glucosamine + diphosphate. The protein operates within nucleotide-sugar biosynthesis; UDP-N-acetyl-alpha-D-glucosamine biosynthesis; N-acetyl-alpha-D-glucosamine 1-phosphate from alpha-D-glucosamine 6-phosphate (route II): step 2/2. It functions in the pathway nucleotide-sugar biosynthesis; UDP-N-acetyl-alpha-D-glucosamine biosynthesis; UDP-N-acetyl-alpha-D-glucosamine from N-acetyl-alpha-D-glucosamine 1-phosphate: step 1/1. Its pathway is bacterial outer membrane biogenesis; LPS lipid A biosynthesis. Catalyzes the last two sequential reactions in the de novo biosynthetic pathway for UDP-N-acetylglucosamine (UDP-GlcNAc). The C-terminal domain catalyzes the transfer of acetyl group from acetyl coenzyme A to glucosamine-1-phosphate (GlcN-1-P) to produce N-acetylglucosamine-1-phosphate (GlcNAc-1-P), which is converted into UDP-GlcNAc by the transfer of uridine 5-monophosphate (from uridine 5-triphosphate), a reaction catalyzed by the N-terminal domain. In Shewanella woodyi (strain ATCC 51908 / MS32), this protein is Bifunctional protein GlmU.